Reading from the N-terminus, the 525-residue chain is MSKDIHDHRILILDFGSQYTQLIARRVREIGVYCELWSWDVTEEQIKGFNPTGIILAGGPESVTEANSPRAPEYVYTAGVPVLGICYGMQTMAEQLGGGVESSSHKEFGYAAVELIAQSALFNKVEDSIGDNGNALLDVWMSHGDKVSAIPEGFVTVAQTASCAYGAMANEEKQFYGVQFHPEVTHTKQGSRILENFVVDICKCEKLWTSASIIDDAIAKMKAQVGDDEVILGLSGGVDSSVVAMLLHRAIGDKLTCVFVDNGLLRLDEGQQVMDMFGDHFGLNIIKIEAEDRFLNRLAGESEPEAKRKIIGNVFIDVFEEESNKLDNAKWLAQGTIYPDVIESAASATGKAHVIKSHHNVGGLPDYMKLGLVEPLRELFKDEVRKIGLELGLPYDMLYRHPFPGPGLGVRILGEVKKEYADLLRRADAIFIEELHKHDLYTKVSQAFTVFLPVKSVGVMGDARKYDWVVSLRCVETIDFMTARWSHLPYDFLGLVSNRIINEIDGISRVVYDISGKPPATIEWE.

A Glutamine amidotransferase type-1 domain is found at 9–207 (RILILDFGSQ…VVDICKCEKL (199 aa)). C86 acts as the Nucleophile in catalysis. Active-site residues include H181 and E183. Residues 208 to 400 (WTSASIIDDA…LGLPYDMLYR (193 aa)) form the GMPS ATP-PPase domain. An ATP-binding site is contributed by 235–241 (SGGVDSS).

In terms of assembly, homodimer.

The catalysed reaction is XMP + L-glutamine + ATP + H2O = GMP + L-glutamate + AMP + diphosphate + 2 H(+). It functions in the pathway purine metabolism; GMP biosynthesis; GMP from XMP (L-Gln route): step 1/1. Functionally, catalyzes the synthesis of GMP from XMP. The polypeptide is GMP synthase [glutamine-hydrolyzing] (Colwellia psychrerythraea (strain 34H / ATCC BAA-681) (Vibrio psychroerythus)).